The following is a 51-amino-acid chain: uncharacterized protein (51 aa).

This is an uncharacterized protein from Grapevine leafroll-associated virus 3 (isolate United States/NY1) (GLRaV-3).